The following is a 464-amino-acid chain: ATP synthase subunit beta (464 aa).

Position 150–157 (150–157) interacts with ATP; sequence GGAGVGKT.

It belongs to the ATPase alpha/beta chains family. F-type ATPases have 2 components, CF(1) - the catalytic core - and CF(0) - the membrane proton channel. CF(1) has five subunits: alpha(3), beta(3), gamma(1), delta(1), epsilon(1). CF(0) has three main subunits: a(1), b(2) and c(9-12). The alpha and beta chains form an alternating ring which encloses part of the gamma chain. CF(1) is attached to CF(0) by a central stalk formed by the gamma and epsilon chains, while a peripheral stalk is formed by the delta and b chains.

The protein localises to the cell membrane. The enzyme catalyses ATP + H2O + 4 H(+)(in) = ADP + phosphate + 5 H(+)(out). Its function is as follows. Produces ATP from ADP in the presence of a proton gradient across the membrane. The catalytic sites are hosted primarily by the beta subunits. The polypeptide is ATP synthase subunit beta (Dehalococcoides mccartyi (strain ATCC BAA-2266 / KCTC 15142 / 195) (Dehalococcoides ethenogenes (strain 195))).